A 366-amino-acid polypeptide reads, in one-letter code: PTI1-like tyrosine-protein kinase 2 (366 aa).

The span at 8–23 shows a compositional bias: basic and acidic residues; sequence GDKKGDSDLSNEEVHL. The tract at residues 8–50 is disordered; the sequence is GDKKGDSDLSNEEVHLKSPWQNSEANQKNQKPQAVVKPEAQKE. Positions 26–39 are enriched in polar residues; sequence PWQNSEANQKNQKP. Positions 71-353 constitute a Protein kinase domain; it reads FGSKSLIGEG…IVVKALQPLL (283 aa). ATP is bound by residues 77–85 and Lys99; that span reads IGEGSYGRV. The active-site Proton acceptor is Asp203.

It belongs to the protein kinase superfamily. Tyr protein kinase family. In terms of assembly, interacts with OXI1. In terms of processing, autophosphorylated and phosphorylated by OXI1.

The enzyme catalyses L-tyrosyl-[protein] + ATP = O-phospho-L-tyrosyl-[protein] + ADP + H(+). With respect to regulation, strongly activated in response to phosphatidic acid (PA) and xylanase in a OXI1- and PDK1-dependent manner, and, to a lesser extent, by hydrogen peroxide and flagellin in a OXI1-dependent manner. Probable tyrosine-protein kinase involved in oxidative burst-mediated signaling leading to specific genes expression. In Arabidopsis thaliana (Mouse-ear cress), this protein is PTI1-like tyrosine-protein kinase 2 (PTI12).